Consider the following 451-residue polypeptide: Phosphoglucosamine mutase (451 aa).

Serine 102 acts as the Phosphoserine intermediate in catalysis. Serine 102, aspartate 243, aspartate 245, and aspartate 247 together coordinate Mg(2+). Serine 102 is subject to Phosphoserine.

This sequence belongs to the phosphohexose mutase family. Mg(2+) serves as cofactor. Activated by phosphorylation.

The catalysed reaction is alpha-D-glucosamine 1-phosphate = D-glucosamine 6-phosphate. Functionally, catalyzes the conversion of glucosamine-6-phosphate to glucosamine-1-phosphate. In Paramagnetospirillum magneticum (strain ATCC 700264 / AMB-1) (Magnetospirillum magneticum), this protein is Phosphoglucosamine mutase.